The following is an 842-amino-acid chain: Amyloid-beta A4 precursor protein-binding family A member 1 (842 aa).

Disordered stretches follow at residues 1–121 (MNHL…DESA), 238–349 (RLHH…EKRD), and 366–439 (KTRT…KESR). Ser-82 carries the phosphoserine modification. Composition is skewed to basic and acidic residues over residues 106 to 115 (DGYEAERAQD) and 240 to 258 (HHYDERSDGESDSPEKEAE). Residues Ser-246, Ser-250, Ser-252, Ser-267, Ser-284, and Ser-289 each carry the phosphoserine modification. A Phosphothreonine modification is found at Thr-309. Phosphoserine is present on residues Ser-317 and Ser-372. Phosphothreonine is present on Thr-375. Basic and acidic residues predominate over residues 392-403 (PTRDCDDQRPVD). Residues 404–421 (GDSPSPGSSSPLGAESSS) show a composition bias toward low complexity. Phosphoserine occurs at positions 406, 408, 413, and 573. A PID domain is found at 460–648 (LIDGIIFAAN…LLNTQDMYND (189 aa)). The tract at residues 631 to 648 (LSQKEYSDLLNTQDMYND) is autoinhibitory helix linker. 2 PDZ domains span residues 661–746 (DVFI…NIVR) and 752–828 (TVLI…MPAA).

In terms of assembly, part of a multimeric complex containing STXBP1 and STX1A. Interacts with STXBP1. Component of the brain-specific heterotrimeric complex (LIN-10-LIN-2-LIN-7 complex) composed of at least APBA1, CASK, and LIN7, which associates with the motor protein KIF17 to transport vesicles along microtubules. Within the complex, interacts (via PDZ domain) with the motor protein KIF17; the interaction is direct and is required for association of KIF17 with the cargo that is to be transported. Binds to the cytoplasmic domain of amyloid protein (APP). Interacts (via PDZ 1 and 2 domains) with FSPB. Isoform 3 interacts (via its truncated PID domain) with active, GTP-bound RAB6A. Also interacts with GTP-bound RAB6B. As to expression, isoform 3 is expressed in brain.

It is found in the cytoplasm. The protein resides in the perinuclear region. Its subcellular location is the nucleus. The protein localises to the golgi apparatus. Its function is as follows. Putative function in synaptic vesicle exocytosis by binding to Munc18-1, an essential component of the synaptic vesicle exocytotic machinery. May modulate processing of the amyloid-beta precursor protein (APP) and hence formation of AAP-beta. Component of the LIN-10-LIN-2-LIN-7 complex, which associates with the motor protein KIF17 to transport vesicles containing N-methyl-D-aspartate (NMDA) receptor subunit NR2B along microtubules. This Mus musculus (Mouse) protein is Amyloid-beta A4 precursor protein-binding family A member 1.